Reading from the N-terminus, the 635-residue chain is Sodium-dependent multivitamin transporter (635 aa).

Transmembrane regions (helical) follow at residues 24–44, 68–88, and 101–121; these read FSIMDYVVFVLLLVLSLAIGL, CLPVALSLLATFQSAVAILGV, and FLGCCYFLGLLIPAHIFIPVF. N-linked (GlcNAc...) asparagine glycosylation occurs at Asn138. Transmembrane regions (helical) follow at residues 143–163, 176–196, 199–219, 256–276, 297–317, 336–356, 396–416, 428–448, and 456–476; these read VCGTVTFIFQMVIYMGVVLYA, LWLSVLALGIVCTVYTALGGL, VIWTDVFQTLVMFLGQLAVII, FWTLAFGGVFMMLSLYGVNQA, VFPFQQVSLCVGCLIGLVMFA, FVLYFVMDLLKGLPGLPGLFI, IMLSRGLAFGYGLLCLGMAYI, ISIFGMVGGPLLGLFCLGMFF, and AVVGLLAGLVMAFWIGIGSIV. Asn489 and Asn498 each carry an N-linked (GlcNAc...) asparagine glycan. Residues 528–548 traverse the membrane as a helical segment; the sequence is LWYSAHNSTTVIVVGLIVSLL.

This sequence belongs to the sodium:solute symporter (SSF) (TC 2.A.21) family. As to quaternary structure, interacts with PDZD11. May be glycosylated. Expressed in microvessels of the brain (at protein level). Expressed in heart, brain, placenta, lung, liver, skeletal muscle, kidney, and pancreas.

It is found in the cell membrane. The protein resides in the apical cell membrane. The catalysed reaction is biotin(out) + 2 Na(+)(out) = biotin(in) + 2 Na(+)(in). It catalyses the reaction (R)-pantothenate(out) + 2 Na(+)(out) = (R)-pantothenate(in) + 2 Na(+)(in). The enzyme catalyses (R)-lipoate(out) + 2 Na(+)(out) = (R)-lipoate(in) + 2 Na(+)(in). It carries out the reaction iodide(out) + 2 Na(+)(out) = iodide(in) + 2 Na(+)(in). Sodium-dependent multivitamin transporter that mediates the electrogenic transport of pantothenate, biotin, lipoate and iodide. Functions as a Na(+)-coupled substrate symporter where the stoichiometry of Na(+):substrate is 2:1, creating an electrochemical Na(+) gradient used as driving force for substrate uptake. Required for biotin and pantothenate uptake in the intestine across the brush border membrane. Plays a role in the maintenance of intestinal mucosa integrity, by providing the gut mucosa with biotin. Contributes to the luminal uptake of biotin and pantothenate into the brain across the blood-brain barrier. This is Sodium-dependent multivitamin transporter from Homo sapiens (Human).